The primary structure comprises 308 residues: D-alanine--D-alanine ligase (308 aa).

The ATP-grasp domain occupies 106-305; the sequence is KMLWKAFGLP…FEQLVVKILE (200 aa). 136–191 serves as a coordination point for ATP; sequence VEKLGLPLMVKPSLEGSSVGLTKVNAIDDLKSAVEFALQYDETVLIEEWLSGDELT. Residues Asp259, Glu272, and Asn274 each contribute to the Mg(2+) site.

It belongs to the D-alanine--D-alanine ligase family. It depends on Mg(2+) as a cofactor. Mn(2+) serves as cofactor.

The protein localises to the cytoplasm. The enzyme catalyses 2 D-alanine + ATP = D-alanyl-D-alanine + ADP + phosphate + H(+). Its pathway is cell wall biogenesis; peptidoglycan biosynthesis. Functionally, cell wall formation. The chain is D-alanine--D-alanine ligase from Histophilus somni (strain 2336) (Haemophilus somnus).